Here is a 186-residue protein sequence, read N- to C-terminus: Peptidyl-tRNA hydrolase (186 aa).

Tyrosine 14 lines the tRNA pocket. The active-site Proton acceptor is the histidine 19. TRNA is bound by residues tyrosine 64, asparagine 66, and asparagine 112.

It belongs to the PTH family. As to quaternary structure, monomer.

The protein localises to the cytoplasm. It catalyses the reaction an N-acyl-L-alpha-aminoacyl-tRNA + H2O = an N-acyl-L-amino acid + a tRNA + H(+). Functionally, hydrolyzes ribosome-free peptidyl-tRNAs (with 1 or more amino acids incorporated), which drop off the ribosome during protein synthesis, or as a result of ribosome stalling. Catalyzes the release of premature peptidyl moieties from peptidyl-tRNA molecules trapped in stalled 50S ribosomal subunits, and thus maintains levels of free tRNAs and 50S ribosomes. In Lachnospira eligens (strain ATCC 27750 / DSM 3376 / VPI C15-48 / C15-B4) (Eubacterium eligens), this protein is Peptidyl-tRNA hydrolase.